The sequence spans 402 residues: MKRFISAWNRTSLIKRIAIGVVIGAILGLLIPKITVIGLLGDMFVGGLKAIAPLLVSALVANALSQTREGQQSNMKTIIVLYLFGTFAAALTAVISHYIFPISLKLGATSATKAAAPQGVGEVFKDLMLKMVDNPINALSQANYIGVLLWAVVFGFAMRTASEHTKELLHTLSEVTSQIVRWIINLAPFGILGLVFDTISKNGVGVLADYGVLILVLVGTMTFVALVINPIIAFVMMGKNPFPLVFRSLKDSRITAFFTRSSAANIPVNLQLCEDLGLNPDTYSVSIPLGSTINMAGAAVTINVLTLAAVTTLGIEVDFATAFILSVVSTISACGASGIAGGSLLLVPVACSLFGISNDLAMQVVGVGFIVGVIQDSCETALNSSTDVLFTAVAEKSRWKKS.

A run of 8 helical transmembrane segments spans residues 17-37 (IAIG…ITVI), 44-64 (FVGG…ANAL), 78-98 (IIVL…ISHY), 138-158 (ALSQ…GFAM), 179-199 (IVRW…FDTI), 212-232 (VLIL…NPII), 295-315 (MAGA…TLGI), and 336-356 (ASGI…LFGI).

Belongs to the dicarboxylate/amino acid:cation symporter (DAACS) (TC 2.A.23) family.

The protein resides in the cell membrane. The enzyme catalyses L-serine(in) + Na(+)(in) = L-serine(out) + Na(+)(out). It catalyses the reaction L-threonine(in) + Na(+)(in) = L-threonine(out) + Na(+)(out). Functionally, involved in the import of serine and threonine into the cell, with the concomitant import of sodium (symport system). The chain is Serine/threonine transporter SstT from Streptococcus thermophilus (strain CNRZ 1066).